The following is a 153-amino-acid chain: MVFEGHLVGTELKVGVVVGRFNEFITSKLLGGALDGLKRHGVEEADIDVAWVPGAFEIPLIAKKMANSGKYDAVITLGTVIRGATTHYDYVCNEVAKGVASLSLQTDIPVIFGVLTTETIEQAIERAGTKAGNKGYESAVAAIEMAHLSKQWA.

Residues phenylalanine 21, 55–57 (AFE), and 79–81 (TVI) each bind 5-amino-6-(D-ribitylamino)uracil. (2S)-2-hydroxy-3-oxobutyl phosphate is bound at residue 84–85 (AT). The Proton donor role is filled by histidine 87. Phenylalanine 112 contributes to the 5-amino-6-(D-ribitylamino)uracil binding site. Residue arginine 126 participates in (2S)-2-hydroxy-3-oxobutyl phosphate binding.

The protein belongs to the DMRL synthase family. Forms an icosahedral capsid composed of 60 subunits, arranged as a dodecamer of pentamers.

It catalyses the reaction (2S)-2-hydroxy-3-oxobutyl phosphate + 5-amino-6-(D-ribitylamino)uracil = 6,7-dimethyl-8-(1-D-ribityl)lumazine + phosphate + 2 H2O + H(+). The protein operates within cofactor biosynthesis; riboflavin biosynthesis; riboflavin from 2-hydroxy-3-oxobutyl phosphate and 5-amino-6-(D-ribitylamino)uracil: step 1/2. Its function is as follows. Catalyzes the formation of 6,7-dimethyl-8-ribityllumazine by condensation of 5-amino-6-(D-ribitylamino)uracil with 3,4-dihydroxy-2-butanone 4-phosphate. This is the penultimate step in the biosynthesis of riboflavin. This is 6,7-dimethyl-8-ribityllumazine synthase from Bacillus cereus (strain AH187).